The primary structure comprises 179 residues: Nuclear transcription factor Y subunit B (179 aa).

The tract at residues 1-32 (MAEAPASPGGGGGSHESGSPRGGGGGGSVREQ) is disordered. A compositionally biased stretch (gly residues) spans 8–28 (PGGGGGSHESGSPRGGGGGGS). The DNA-binding element occupies 36 to 42 (LPIANIS). A subunit association domain (SAD) region spans residues 63-74 (VQECVSEFISFI). The disordered stretch occupies residues 147 to 179 (SSSAAEGMGQQGAYNQGMGYMQPQYHNGDISNV).

It belongs to the NFYB/HAP3 subunit family. As to quaternary structure, heterotrimeric transcription factor composed of three components, NF-YA, NF-YB and NF-YC. NF-YB and NF-YC must interact and dimerize for NF-YA association and DNA binding.

The protein localises to the nucleus. In terms of biological role, component of the NF-Y/HAP transcription factor complex. The NF-Y complex stimulates the transcription of various genes by recognizing and binding to a CCAAT motif in promoters. The sequence is that of Nuclear transcription factor Y subunit B (NFY2) from Zea mays (Maize).